We begin with the raw amino-acid sequence, 824 residues long: Leucine--tRNA ligase (824 aa).

Residues 42–52 (PYPSGRIHMGH) carry the 'HIGH' region motif. Residues 581 to 585 (KMSKS) carry the 'KMSKS' region motif. Lys-584 lines the ATP pocket.

It belongs to the class-I aminoacyl-tRNA synthetase family.

It is found in the cytoplasm. It carries out the reaction tRNA(Leu) + L-leucine + ATP = L-leucyl-tRNA(Leu) + AMP + diphosphate. The polypeptide is Leucine--tRNA ligase (Geobacter sulfurreducens (strain ATCC 51573 / DSM 12127 / PCA)).